The sequence spans 580 residues: Laccase-20 (580 aa).

A signal peptide spans 1-23 (MVASLLCTVAVAVLAVAAVGGEA). 2 consecutive Plastocyanin-like domains span residues 31–147 (VVHE…PRDG) and 156–310 (KDVP…YTGV). 2 N-linked (GlcNAc...) asparagine glycosylation sites follow: Asn-36 and Asn-42. His-81 and His-83 together coordinate Cu cation. Asn-115 carries N-linked (GlcNAc...) asparagine glycosylation. The Cu cation site is built by His-126 and His-128. Asn-200, Asn-339, Asn-373, Asn-392, Asn-399, Asn-429, and Asn-460 each carry an N-linked (GlcNAc...) asparagine glycan. The region spanning 419–561 (DFPVRPPRPY…ATAFIVEDGP (143 aa)) is the Plastocyanin-like 3 domain. Cu cation contacts are provided by Asn-478, His-481, His-483, His-540, Cys-541, His-542, His-546, and Met-551. Positions 560 to 580 (GPTPETSLPPPPPEFKRCDAS) are disordered.

The protein belongs to the multicopper oxidase family. It depends on Cu cation as a cofactor.

The protein localises to the secreted. The protein resides in the extracellular space. It localises to the apoplast. It carries out the reaction 4 hydroquinone + O2 = 4 benzosemiquinone + 2 H2O. Functionally, lignin degradation and detoxification of lignin-derived products. The polypeptide is Laccase-20 (LAC20) (Oryza sativa subsp. japonica (Rice)).